Consider the following 354-residue polypeptide: Chorismate synthase (354 aa).

Arg-48 contacts NADP(+). Residues 125–127 (RSS), 239–240 (NA), Gly-280, 295–299 (KPVAT), and Arg-321 each bind FMN.

The protein belongs to the chorismate synthase family. As to quaternary structure, homotetramer. Requires FMNH2 as cofactor.

It catalyses the reaction 5-O-(1-carboxyvinyl)-3-phosphoshikimate = chorismate + phosphate. The protein operates within metabolic intermediate biosynthesis; chorismate biosynthesis; chorismate from D-erythrose 4-phosphate and phosphoenolpyruvate: step 7/7. Functionally, catalyzes the anti-1,4-elimination of the C-3 phosphate and the C-6 proR hydrogen from 5-enolpyruvylshikimate-3-phosphate (EPSP) to yield chorismate, which is the branch point compound that serves as the starting substrate for the three terminal pathways of aromatic amino acid biosynthesis. This reaction introduces a second double bond into the aromatic ring system. This chain is Chorismate synthase, found in Christiangramia forsetii (strain DSM 17595 / CGMCC 1.15422 / KT0803) (Gramella forsetii).